Consider the following 3230-residue polypeptide: Helicase SRCAP (3230 aa).

Residues 1-71 (MQSSPSPAHP…GPPDGATVPL (71 aa)) form a disordered region. A compositionally biased stretch (low complexity) spans 26-41 (GSNPVSPASSSSPASS). One can recognise an HSA domain in the interval 124–196 (LPKVPEPPRP…EQAKLRRIAS (73 aa)). Disordered regions lie at residues 253 to 547 (QPLT…EEDD) and 559 to 581 (EEQSEADAGSGPPTPGPTTLGPK). Over residues 257–273 (SSKAGSSPCLGSSSAAS) the composition is skewed to low complexity. Positions 283–313 (DDEDGDFQPQEDEEEDDEETIEVEEQQEGND) are enriched in acidic residues. A compositionally biased stretch (basic and acidic residues) spans 315–329 (EAQRREIELLRREGE). Low complexity predominate over residues 337–356 (RSLPPQLLEGPSSPSQTPSS). A compositionally biased stretch (acidic residues) spans 397-425 (DEDDEEFTANEEEAEDEEDTIAAEEQLEG). Residues 426-441 (EVDHAMELSELAREGE) are compositionally biased toward basic and acidic residues. Composition is skewed to acidic residues over residues 462–490 (SEDEDEDEVDANSSDCEPEGPVEAEEPPQ), 503–517 (RSEDEEDEHSEEEET), and 524–533 (EESESEESED). In terms of domain architecture, Helicase ATP-binding spans 630–795 (VTMYEKKLNG…WSLMHFLMPH (166 aa)). 643–650 (DEMGLGKT) lines the ATP pocket. 3 disordered regions span residues 1017 to 1045 (APLGPVPVRPPPGPELSAQPTPGPVPQVL), 1058 to 1125 (PPLI…PGSS), and 1138 to 1166 (TFPPAAATTTSTTTATATTTAVPAPTPAP). 2 stretches are compositionally biased toward pro residues: residues 1018–1030 (PLGPVPVRPPPGP) and 1058–1076 (PPLIPASRPPGPVLLPPLQ). Residues 1093–1107 (LSGTSRPPTPTLSLK) show a composition bias toward low complexity. The span at 1108-1123 (PTPPAPVRLSPAPPPG) shows a compositional bias: pro residues. Residues 1138–1160 (TFPPAAATTTSTTTATATTTAVP) show a composition bias toward low complexity. At Ser-1172 the chain carries Phosphoserine. 4 disordered regions span residues 1320 to 1366 (GLTP…APMP), 1406 to 1425 (SLPGPASSPMPIPNSSPLAS), 1629 to 1760 (VPVM…ASPV), and 1839 to 1893 (SRLP…EEKR). Pro residues predominate over residues 1323 to 1336 (PVPPLAPAPRPPSS). Positions 1337 to 1360 (GLPAVLNPRPTLTPGRLPTPTLGT) are enriched in low complexity. Residues 1675–1691 (PASTQTLALAPALAPTL) show a composition bias toward low complexity. Positions 1692 to 1733 (GGSSPSQTLSLGTGNPQGPFPTQTLSLTPASSLVPTPAQTLS) are enriched in polar residues. Positions 1750–1760 (PAPPLAPASPV) are enriched in pro residues. Positions 2044–2197 (KLQTLAVLLR…DMAIEGGNFT (154 aa)) constitute a Helicase C-terminal domain. Disordered regions lie at residues 2214–2233 (LEEPSSSSVPSAPEEEEETV), 2271–2298 (FNENDGFPAGEGEEAGRPGAEDEEMSRA), 2327–2453 (VSRE…APAA), 2564–2583 (LELASVASSETSSLSLVPPK), 2598–3081 (KNLS…GRKS), and 3095–3230 (DLAD…KAKT). Low complexity predominate over residues 2215–2225 (EEPSSSSVPSA). 3 stretches are compositionally biased toward basic and acidic residues: residues 2284 to 2298 (EAGRPGAEDEEMSRA), 2327 to 2358 (VSREELKQAEEQVEAARKDLDQAKEEVFRLPQ), and 2386 to 2403 (KAPERPGTRVSERLRGAR). Positions 2438–2448 (RPAPRPRPTPA) are enriched in pro residues. 2 stretches are compositionally biased toward low complexity: residues 2564–2579 (LELASVASSETSSLSL) and 2600–2611 (LSLTPSAPSLTL). The span at 2669–2679 (EADRTSEELTE) shows a compositional bias: basic and acidic residues. Residues 2694-2712 (VTAEVAAPSTSSSATSSPE) are compositionally biased toward low complexity. The span at 2782–2794 (SETSASPGSPSVR) shows a compositional bias: polar residues. The segment covering 2807–2817 (GPCEAAPSSSL) has biased composition (low complexity). Over residues 2856-2868 (VKRRRGRPPKKNR) the composition is skewed to basic residues. Positions 2857 to 2869 (KRRRGRPPKKNRS) form a DNA-binding region, a.T hook 1. Pro residues predominate over residues 2913–2926 (IPGPQPLGPQPVHR). The a.T hook 2 DNA-binding region spans 2936 to 2948 (KRRRGRPPKARDL). Residues 2953–2965 (TISSAGDGNSESR) show a composition bias toward polar residues. The segment covering 2967–2982 (QPPPHPSPLTPLPPLL) has biased composition (pro residues). Positions 2983–3002 (VCPTATVANTVTTVTISTSP) are enriched in low complexity. A DNA-binding region (a.T hook 3) is located at residues 3004 to 3016 (KRKRGRPPKNPPS). Positions 3011 to 3020 (PKNPPSPRPS) are enriched in pro residues. A compositionally biased stretch (low complexity) spans 3044-3053 (PQGQGESEGS). Residues 3168 to 3184 (SVEESEAEASGEEEEGD) show a composition bias toward acidic residues.

This sequence belongs to the SNF2/RAD54 helicase family. SWR1 subfamily. As to quaternary structure, interacts with CREBBP and EP300. May be part of a complex containing SRCAP, CREBBP, CARM1 and GRIP1. Component of the chromatin-remodeling SRCAP complex composed of at least SRCAP, DMAP1, RUVBL1, RUVBL2, ACTL6A, YEATS4, VPS72, ACTR6 and ZNHIT1. Component of a NuA4-related complex which contains EP400, TRRAP/PAF400, SRCAP, BRD8/SMAP, EPC1, DMAP1/DNMAP1, RUVBL1/TIP49, RUVBL2, actin, ACTL6A/BAF53A, VPS72 and YEATS4/GAS41. (Microbial infection) Interacts with hepatitis C virus (HCV) NS5A. In terms of assembly, (Microbial infection) Interacts with human adenovirus 2 DBP.

It is found in the nucleus. Functionally, catalytic component of the SRCAP complex which mediates the ATP-dependent exchange of histone H2AZ/H2B dimers for nucleosomal H2A/H2B, leading to transcriptional regulation of selected genes by chromatin remodeling. Acts as a coactivator for CREB-mediated transcription, steroid receptor-mediated transcription, and Notch-mediated transcription. This Homo sapiens (Human) protein is Helicase SRCAP (SRCAP).